We begin with the raw amino-acid sequence, 210 residues long: MSNLKPDVEHCTGAGTGTGTGPSGPLEEEVRTLFVSGLPVDIKPRELYLLFRPFKGYEGSLIKLTSRQPVGFVIFDSRAGAEAAKNALNGIRFDPENPQTLRLEFAKANTKMAKSKLIATPNPTSVHPALGAHLIARDPYDLMGAALIPASPEAWAPYPLYTTELTPAISHTTFTYPAATAAAAAALHAQVRWYPSSDTAQQGWKYRQFC.

The span at 1 to 10 (MSNLKPDVEH) shows a compositional bias: basic and acidic residues. The segment at 1-25 (MSNLKPDVEHCTGAGTGTGTGPSGP) is disordered. N-acetylserine is present on Ser-2. The RRM domain maps to 31 to 108 (RTLFVSGLPV…QTLRLEFAKA (78 aa)). Positions 41 to 51 (DIKPRELYLLF) are important for homodimerization.

Homodimer. Interacts with EEF2.

Its subcellular location is the cytoplasm. It localises to the nucleus. The protein resides in the stress granule. Functionally, RNA-binding protein involved in the regulation of smooth muscle cell differentiation and proliferation in the gastrointestinal system. Binds NOG mRNA, the major inhibitor of the bone morphogenetic protein (BMP) pathway. Mediates an increase of NOG mRNA levels, thereby contributing to the negative regulation of BMP signaling pathway and promoting reversible dedifferentiation and proliferation of smooth muscle cells. Acts as a pre-mRNA alternative splicing regulator. Mediates ACTN1 and FLNB alternative splicing. Likely binds to mRNA tandem CAC trinucleotide or CA dinucleotide motifs. The polypeptide is RNA binding protein, mRNA processing factor 2 (Rbpms2) (Rattus norvegicus (Rat)).